Consider the following 190-residue polypeptide: Pyridoxamine 5'-phosphate oxidase C1952.08c homolog (190 aa).

Residues S62 and K69 each contribute to the FMN site.

The protein belongs to the pyridoxamine 5'-phosphate oxidase family. FMN is required as a cofactor.

It is found in the cytoplasm. Its subcellular location is the nucleus. This Schizosaccharomyces pombe (strain 972 / ATCC 24843) (Fission yeast) protein is Pyridoxamine 5'-phosphate oxidase C1952.08c homolog.